The primary structure comprises 717 residues: Probable E3 ubiquitin-protein ligase WAVH2 (717 aa).

2 stretches are compositionally biased toward polar residues: residues 13–28 and 85–94; these read VSSNQDKPQQHSSLHT and RTTSNATPRT. The segment at 13–120 is disordered; sequence VSSNQDKPQQ…SSSSSSSQGG (108 aa). Over residues 95 to 117 the composition is skewed to low complexity; sequence SNSSSPKFFSNPSSPKSSSSSSS. An RING-type; atypical zinc finger spans residues 140 to 184; it reads CAICLQRVNSNQSNSTAAIFTAECSHSFHLSCVNGLEDKRCPFCS. One can recognise a VWFA domain in the interval 326-456; the sequence is DLVTVLDLSN…LNATRIPFVV (131 aa).

In terms of tissue distribution, expressed in root tips, cotyledons, leaf primordia and hypocotyls.

It catalyses the reaction S-ubiquitinyl-[E2 ubiquitin-conjugating enzyme]-L-cysteine + [acceptor protein]-L-lysine = [E2 ubiquitin-conjugating enzyme]-L-cysteine + N(6)-ubiquitinyl-[acceptor protein]-L-lysine.. In terms of biological role, probable E3 ubiquitin-protein ligase involved in the regulation of root growth. Acts as a positive regulator of root gravitropism. The chain is Probable E3 ubiquitin-protein ligase WAVH2 from Arabidopsis thaliana (Mouse-ear cress).